A 104-amino-acid polypeptide reads, in one-letter code: UPF0145 protein NP_2600A (104 aa).

It belongs to the UPF0145 family.

This Natronomonas pharaonis (strain ATCC 35678 / DSM 2160 / CIP 103997 / JCM 8858 / NBRC 14720 / NCIMB 2260 / Gabara) (Halobacterium pharaonis) protein is UPF0145 protein NP_2600A.